A 372-amino-acid polypeptide reads, in one-letter code: N-methyl-L-tryptophan oxidase (372 aa).

Asp-4–His-34 contacts FAD. The residue at position 308 (Cys-308) is an S-8alpha-FAD cysteine.

It belongs to the MSOX/MTOX family. MTOX subfamily. Monomer. The cofactor is FAD.

The catalysed reaction is N(alpha)-methyl-L-tryptophan + O2 + H2O = L-tryptophan + formaldehyde + H2O2. In terms of biological role, catalyzes the oxidative demethylation of N-methyl-L-tryptophan. The sequence is that of N-methyl-L-tryptophan oxidase from Shigella boydii serotype 18 (strain CDC 3083-94 / BS512).